A 110-amino-acid chain; its full sequence is Nucleoid-associated protein ESA_02800 (110 aa).

The interval 89–110 (QKEKMASVSSGMQLPPGFKMPF) is disordered.

This sequence belongs to the YbaB/EbfC family. As to quaternary structure, homodimer.

The protein localises to the cytoplasm. It localises to the nucleoid. Binds to DNA and alters its conformation. May be involved in regulation of gene expression, nucleoid organization and DNA protection. The protein is Nucleoid-associated protein ESA_02800 of Cronobacter sakazakii (strain ATCC BAA-894) (Enterobacter sakazakii).